We begin with the raw amino-acid sequence, 321 residues long: Probable ATP-dependent 6-phosphofructokinase (321 aa).

ATP contacts are provided by residues Gly20 and 82-83 (RF). Substrate contacts are provided by residues 136–138 (TID), 180–182 (MGR), Glu235, Arg259, and 265–268 (YLQR). The Proton acceptor role is filled by Asp138.

Belongs to the phosphofructokinase type A (PFKA) family. Homotetramer. Mg(2+) is required as a cofactor.

Its subcellular location is the cytoplasm. It carries out the reaction beta-D-fructose 6-phosphate + ATP = beta-D-fructose 1,6-bisphosphate + ADP + H(+). The protein operates within carbohydrate degradation; glycolysis; D-glyceraldehyde 3-phosphate and glycerone phosphate from D-glucose: step 3/4. Functionally, catalyzes the phosphorylation of D-fructose 6-phosphate to fructose 1,6-bisphosphate by ATP, the first committing step of glycolysis. This is Probable ATP-dependent 6-phosphofructokinase (pfkA) from Ureaplasma parvum serovar 3 (strain ATCC 700970).